Consider the following 603-residue polypeptide: Elongation factor 4 (603 aa).

In terms of domain architecture, tr-type G spans 5 to 187 (RHIRNFCIIA…AVVNFVPPPK (183 aa)). Residues 17-22 (DHGKST) and 134-137 (NKID) each bind GTP.

This sequence belongs to the TRAFAC class translation factor GTPase superfamily. Classic translation factor GTPase family. LepA subfamily.

Its subcellular location is the cell membrane. It catalyses the reaction GTP + H2O = GDP + phosphate + H(+). Its function is as follows. Required for accurate and efficient protein synthesis under certain stress conditions. May act as a fidelity factor of the translation reaction, by catalyzing a one-codon backward translocation of tRNAs on improperly translocated ribosomes. Back-translocation proceeds from a post-translocation (POST) complex to a pre-translocation (PRE) complex, thus giving elongation factor G a second chance to translocate the tRNAs correctly. Binds to ribosomes in a GTP-dependent manner. The protein is Elongation factor 4 of Symbiobacterium thermophilum (strain DSM 24528 / JCM 14929 / IAM 14863 / T).